The chain runs to 586 residues: Actin-related protein 9 (586 aa).

The tract at residues 141–169 (STPIVDKDADVDPLQRSTPDDTEPNSEEN) is disordered.

This sequence belongs to the actin family. ARP8 subfamily.

The polypeptide is Actin-related protein 9 (ARP9) (Oryza sativa subsp. japonica (Rice)).